Consider the following 120-residue polypeptide: NAD(P)H-quinone oxidoreductase subunit 3 (120 aa).

Transmembrane regions (helical) follow at residues 10-30 (FLGF…TNLI), 64-84 (MFAL…PWAV), and 89-109 (LGLL…IALA).

Belongs to the complex I subunit 3 family. In terms of assembly, NDH-1 can be composed of about 15 different subunits; different subcomplexes with different compositions have been identified which probably have different functions.

Its subcellular location is the cellular thylakoid membrane. The catalysed reaction is a plastoquinone + NADH + (n+1) H(+)(in) = a plastoquinol + NAD(+) + n H(+)(out). The enzyme catalyses a plastoquinone + NADPH + (n+1) H(+)(in) = a plastoquinol + NADP(+) + n H(+)(out). NDH-1 shuttles electrons from an unknown electron donor, via FMN and iron-sulfur (Fe-S) centers, to quinones in the respiratory and/or the photosynthetic chain. The immediate electron acceptor for the enzyme in this species is believed to be plastoquinone. Couples the redox reaction to proton translocation, and thus conserves the redox energy in a proton gradient. Cyanobacterial NDH-1 also plays a role in inorganic carbon-concentration. In Prochlorococcus marinus (strain MIT 9515), this protein is NAD(P)H-quinone oxidoreductase subunit 3.